The sequence spans 431 residues: UDP-N-acetylglucosamine 1-carboxyvinyltransferase (431 aa).

22-23 serves as a coordination point for phosphoenolpyruvate; sequence KN. Arginine 92 lines the UDP-N-acetyl-alpha-D-glucosamine pocket. Residue aspartate 116 is the Proton donor of the active site. Residues 121–125, aspartate 307, and isoleucine 330 each bind UDP-N-acetyl-alpha-D-glucosamine; that span reads RPIDQ.

Belongs to the EPSP synthase family. MurA subfamily.

It localises to the cytoplasm. The catalysed reaction is phosphoenolpyruvate + UDP-N-acetyl-alpha-D-glucosamine = UDP-N-acetyl-3-O-(1-carboxyvinyl)-alpha-D-glucosamine + phosphate. Its pathway is cell wall biogenesis; peptidoglycan biosynthesis. In terms of biological role, cell wall formation. Adds enolpyruvyl to UDP-N-acetylglucosamine. The chain is UDP-N-acetylglucosamine 1-carboxyvinyltransferase from Lactobacillus acidophilus (strain ATCC 700396 / NCK56 / N2 / NCFM).